The following is a 340-amino-acid chain: Extracellular matrix protein-binding protein emp (340 aa).

The first 26 residues, 1-26, serve as a signal peptide directing secretion; it reads MKKKLLVLTMSTLFATQIMNSNHAKA.

The protein localises to the cell surface. In terms of biological role, adhesin that binds to the host cell extracellular matrix proteins fibronectin, fibrinogen, collagen, and vitronectin. In Staphylococcus aureus (strain MSSA476), this protein is Extracellular matrix protein-binding protein emp (emp).